Here is a 145-residue protein sequence, read N- to C-terminus: D-aminoacyl-tRNA deacylase (145 aa).

Positions 137 to 138 (GP) match the Gly-cisPro motif, important for rejection of L-amino acids motif.

The protein belongs to the DTD family. As to quaternary structure, homodimer.

It is found in the cytoplasm. The catalysed reaction is glycyl-tRNA(Ala) + H2O = tRNA(Ala) + glycine + H(+). It carries out the reaction a D-aminoacyl-tRNA + H2O = a tRNA + a D-alpha-amino acid + H(+). In terms of biological role, an aminoacyl-tRNA editing enzyme that deacylates mischarged D-aminoacyl-tRNAs. Also deacylates mischarged glycyl-tRNA(Ala), protecting cells against glycine mischarging by AlaRS. Acts via tRNA-based rather than protein-based catalysis; rejects L-amino acids rather than detecting D-amino acids in the active site. By recycling D-aminoacyl-tRNA to D-amino acids and free tRNA molecules, this enzyme counteracts the toxicity associated with the formation of D-aminoacyl-tRNA entities in vivo and helps enforce protein L-homochirality. The protein is D-aminoacyl-tRNA deacylase of Klebsiella pneumoniae (strain 342).